Here is a 441-residue protein sequence, read N- to C-terminus: Adenylyltransferase and sulfurtransferase MOCS3 (441 aa).

ATP-binding positions include Gly83, Asp104, 111 to 115 (TNLHR), Lys128, and 172 to 173 (DN). 2 residues coordinate Zn(2+): Cys213 and Cys216. Cys230 (glycyl thioester intermediate; for adenylyltransferase activity) is an active-site residue. Positions 288 and 291 each coordinate Zn(2+). One can recognise a Rhodanese domain in the interval 339–439 (AGRDHLLVDV…WTKTIDPNFP (101 aa)). The active-site Cysteine persulfide intermediate; for sulfurtransferase activity is the Cys395.

It in the N-terminal section; belongs to the HesA/MoeB/ThiF family. UBA4 subfamily. Requires Zn(2+) as cofactor.

Its subcellular location is the cytoplasm. It catalyses the reaction [molybdopterin-synthase sulfur-carrier protein]-C-terminal Gly-Gly + ATP + H(+) = [molybdopterin-synthase sulfur-carrier protein]-C-terminal Gly-Gly-AMP + diphosphate. It carries out the reaction [molybdopterin-synthase sulfur-carrier protein]-C-terminal Gly-Gly-AMP + S-sulfanyl-L-cysteinyl-[cysteine desulfurase] + AH2 = [molybdopterin-synthase sulfur-carrier protein]-C-terminal-Gly-aminoethanethioate + L-cysteinyl-[cysteine desulfurase] + A + AMP + 2 H(+). It participates in tRNA modification; 5-methoxycarbonylmethyl-2-thiouridine-tRNA biosynthesis. The protein operates within cofactor biosynthesis; molybdopterin biosynthesis. Functionally, plays a central role in 2-thiolation of mcm(5)S(2)U at tRNA wobble positions of cytosolic tRNA(Lys), tRNA(Glu) and tRNA(Gln). Also essential during biosynthesis of the molybdenum cofactor. Acts by mediating the C-terminal thiocarboxylation of sulfur carriers URM1 and MOCS2A. Its N-terminus first activates URM1 and MOCS2A as acyl-adenylates (-COAMP), then the persulfide sulfur on the catalytic cysteine is transferred to URM1 and MOCS2A to form thiocarboxylation (-COSH) of their C-terminus. The reaction probably involves hydrogen sulfide that is generated from the persulfide intermediate and that acts as a nucleophile towards URM1 and MOCS2A. Subsequently, a transient disulfide bond is formed. Does not use thiosulfate as sulfur donor; NFS1 probably acting as a sulfur donor for thiocarboxylation reactions. The sequence is that of Adenylyltransferase and sulfurtransferase MOCS3 from Anopheles gambiae (African malaria mosquito).